Here is a 387-residue protein sequence, read N- to C-terminus: Erythronate-4-phosphate dehydrogenase (387 aa).

Substrate is bound by residues serine 45 and threonine 67. Aspartate 147 is an NAD(+) binding site. Arginine 208 is a catalytic residue. Aspartate 232 contributes to the NAD(+) binding site. Glutamate 237 is a catalytic residue. Residue histidine 254 is the Proton donor of the active site. An NAD(+)-binding site is contributed by glycine 257. Tyrosine 258 is a binding site for substrate.

It belongs to the D-isomer specific 2-hydroxyacid dehydrogenase family. PdxB subfamily. Homodimer.

It localises to the cytoplasm. It carries out the reaction 4-phospho-D-erythronate + NAD(+) = (R)-3-hydroxy-2-oxo-4-phosphooxybutanoate + NADH + H(+). It functions in the pathway cofactor biosynthesis; pyridoxine 5'-phosphate biosynthesis; pyridoxine 5'-phosphate from D-erythrose 4-phosphate: step 2/5. Catalyzes the oxidation of erythronate-4-phosphate to 3-hydroxy-2-oxo-4-phosphonooxybutanoate. The protein is Erythronate-4-phosphate dehydrogenase of Shewanella woodyi (strain ATCC 51908 / MS32).